The sequence spans 201 residues: MAARTAFGAVCRRLWQGLGNFSVNTSKGNTAKNGGLLLSTNMKWVQFSNLHVDVPKDLTKPVVTISDEPDILYKRLSVLVKGHDKAVLDSYEYFAVLAAKELGISIKVHEPPRKIERFTLLQSVHIYKKHRVQYEMRTLYRCLELEHLTGSTADVYLEYIQRNLPEGVAMEVTKTQLEQLPEHIKEPIWETLSEEKEESKS.

Belongs to the universal ribosomal protein uS10 family. Component of the mitochondrial small ribosomal subunit (mt-SSU). Mature mammalian 55S mitochondrial ribosomes consist of a small (28S) and a large (39S) subunit. The 28S small subunit contains a 12S ribosomal RNA (12S mt-rRNA) and 30 different proteins. The 39S large subunit contains a 16S rRNA (16S mt-rRNA), a copy of mitochondrial valine transfer RNA (mt-tRNA(Val)), which plays an integral structural role, and 52 different proteins.

It is found in the mitochondrion. The protein is Small ribosomal subunit protein uS10m (MRPS10) of Homo sapiens (Human).